The chain runs to 275 residues: 4-diphosphocytidyl-2-C-methyl-D-erythritol kinase (275 aa).

The active site involves Lys14. 98 to 108 (PMGAGLGGGSS) is a binding site for ATP. Asp140 is an active-site residue.

Belongs to the GHMP kinase family. IspE subfamily.

It carries out the reaction 4-CDP-2-C-methyl-D-erythritol + ATP = 4-CDP-2-C-methyl-D-erythritol 2-phosphate + ADP + H(+). It functions in the pathway isoprenoid biosynthesis; isopentenyl diphosphate biosynthesis via DXP pathway; isopentenyl diphosphate from 1-deoxy-D-xylulose 5-phosphate: step 3/6. Functionally, catalyzes the phosphorylation of the position 2 hydroxy group of 4-diphosphocytidyl-2C-methyl-D-erythritol. This is 4-diphosphocytidyl-2-C-methyl-D-erythritol kinase from Francisella tularensis subsp. tularensis (strain WY96-3418).